A 430-amino-acid chain; its full sequence is Synaptotagmin-11 (430 aa).

At 1–15 the chain is on the vesicular side; that stretch reads MAEITNIRPSFDVSP. Residues 16 to 36 traverse the membrane as a helical segment; the sequence is VAAGLIGASVLVVCVSVTVFV. The Cytoplasmic portion of the chain corresponds to 37 to 430; that stretch reads WTCCHQQAEK…IAKWHSLSEY (394 aa). Over residues 79-90 the composition is skewed to basic and acidic residues; that stretch reads RRDKDGPRRESG. 2 disordered regions span residues 79-120 and 132-152; these read RRDK…CMDQ and RSPM…SSPE. Ser-133 bears the Phosphoserine mark. Over residues 134 to 150 the composition is skewed to polar residues; the sequence is PMTSLTPGESKATSPSS. C2 domains are found at residues 156–278 and 290–425; these read MLGS…QLTR and SRGE…AKWH. Ca(2+)-binding residues include Asp-249, Ser-252, and Asp-255.

Belongs to the synaptotagmin family. In terms of assembly, homodimer. Can also form heterodimers. Interacts with PRKN. Interacts (via C2 2 domain) with AGO2 and SND1; the interaction with SND1 is direct. Interacts with KIF1A; the interaction increases in presence of calcium. Ca(2+) is required as a cofactor. Post-translationally, ubiquitinated, at least by PRKN, and targeted to the proteasome complex for degradation. Ubiquitination is inhibited by ATP13A2. As to expression, expressed in cerebellun, cerebellar cortex, hippocampus, olfactory bulb and spinal cord (at protein level). Expressed by neurons, astrocytes and microglia (at protein level). Expressed in macrophages (at protein level).

The protein localises to the cytoplasmic vesicle membrane. It is found in the perikaryon. The protein resides in the golgi apparatus. Its subcellular location is the trans-Golgi network membrane. It localises to the recycling endosome membrane. The protein localises to the lysosome membrane. It is found in the cytoplasmic vesicle. The protein resides in the phagosome. Its subcellular location is the cell projection. It localises to the axon. The protein localises to the dendrite. It is found in the postsynaptic density. The protein resides in the clathrin-coated vesicle membrane. Synaptotagmin family member involved in vesicular and membrane trafficking which does not bind Ca(2+). Inhibits clathrin-mediated and bulk endocytosis, functions to ensure precision in vesicle retrieval. Plays an important role in dopamine transmission by regulating endocytosis and the vesicle-recycling process. Essential component of a neuronal vesicular trafficking pathway that differs from the synaptic vesicle trafficking pathway but is crucial for development and synaptic plasticity. In macrophages and microglia, inhibits the conventional cytokine secretion, of at least IL6 and TNF, and phagocytosis. In astrocytes, regulates lysosome exocytosis, mechanism required for the repair of injured astrocyte cell membrane. Required for the ATP13A2-mediated regulation of the autophagy-lysosome pathway. The polypeptide is Synaptotagmin-11 (Mus musculus (Mouse)).